A 322-amino-acid polypeptide reads, in one-letter code: Malate dehydrogenase (322 aa).

NAD(+) contacts are provided by residues 10 to 15 (GSGQIG) and Asp34. Substrate-binding residues include Arg83 and Arg89. Residues Asn96 and 119–121 (ITN) each bind NAD(+). Positions 121 and 152 each coordinate substrate. His176 serves as the catalytic Proton acceptor.

The protein belongs to the LDH/MDH superfamily. MDH type 3 family.

It catalyses the reaction (S)-malate + NAD(+) = oxaloacetate + NADH + H(+). Catalyzes the reversible oxidation of malate to oxaloacetate. In Rhodopseudomonas palustris (strain HaA2), this protein is Malate dehydrogenase.